The chain runs to 141 residues: Large ribosomal subunit protein uL11 (141 aa).

The protein belongs to the universal ribosomal protein uL11 family. As to quaternary structure, part of the ribosomal stalk of the 50S ribosomal subunit. Interacts with L10 and the large rRNA to form the base of the stalk. L10 forms an elongated spine to which L12 dimers bind in a sequential fashion forming a multimeric L10(L12)X complex. Post-translationally, one or more lysine residues are methylated.

In terms of biological role, forms part of the ribosomal stalk which helps the ribosome interact with GTP-bound translation factors. This chain is Large ribosomal subunit protein uL11, found in Fervidobacterium nodosum (strain ATCC 35602 / DSM 5306 / Rt17-B1).